Here is a 186-residue protein sequence, read N- to C-terminus: UPF0301 protein Neut_0448 (186 aa).

This sequence belongs to the UPF0301 (AlgH) family.

In Nitrosomonas eutropha (strain DSM 101675 / C91 / Nm57), this protein is UPF0301 protein Neut_0448.